Here is a 302-residue protein sequence, read N- to C-terminus: Segregation and condensation protein A (302 aa).

Belongs to the ScpA family. Component of a cohesin-like complex composed of ScpA, ScpB and the Smc homodimer, in which ScpA and ScpB bind to the head domain of Smc. The presence of the three proteins is required for the association of the complex with DNA.

It is found in the cytoplasm. In terms of biological role, participates in chromosomal partition during cell division. May act via the formation of a condensin-like complex containing Smc and ScpB that pull DNA away from mid-cell into both cell halves. This chain is Segregation and condensation protein A, found in Xylella fastidiosa (strain Temecula1 / ATCC 700964).